A 373-amino-acid polypeptide reads, in one-letter code: MSVRRHIGNPEYLTRRIPQNPRYQHVKSRLDTGNSMTKYIEKLEEIKKNYRYKKDELFKRLKVTTFAQLVIQVASLSDQTLEVTAEEIQRLEDNDSATSEPDAEITAKTNGNGSPGEQSPSPVQFINSEGAGDFSRSTLQSVISGVGELDLDKGLVKKTEPNTKDKPYPDCPFLLLDVRDRDSYQQCHIVGAYSYPIATLSRTMNPYSNDILEYKNAHGKIIILYDDDERLASQAATTMCERGFENLFMLSGGLKVLAQKFPEGLITGSLPASCQQALPPGSARKRSSPKVPPLPAENKWRFTPEDLKKIEYYLEEDQGPADNPSRLSQANASGRDAKVPGTRSGQNLPAGGPASHQNPRSLGSGHLQGKPWK.

The interval 89–127 (QRLEDNDSATSEPDAEITAKTNGNGSPGEQSPSPVQFIN) is disordered. Phosphoserine occurs at positions 96 and 99. Residues 107–127 (AKTNGNGSPGEQSPSPVQFIN) are compositionally biased toward polar residues. Threonine 109 bears the Phosphothreonine mark. Phosphoserine is present on residues serine 114 and serine 121. The region spanning 169–266 (PDCPFLLLDV…LAQKFPEGLI (98 aa)) is the Rhodanese domain. Disordered regions lie at residues 275-300 (QQAL…ENKW) and 315-373 (EEDQ…KPWK). Residue arginine 343 is modified to Omega-N-methylarginine.

The protein belongs to the CEP41 family. In terms of assembly, found in a complex with TTLL6.

Its subcellular location is the cytoplasm. The protein localises to the cytoskeleton. It localises to the microtubule organizing center. The protein resides in the centrosome. It is found in the cell projection. Its subcellular location is the cilium. The protein localises to the cilium basal body. In terms of biological role, required during ciliogenesis for tubulin glutamylation in cilium. Probably acts by participating in the transport of TTLL6, a tubulin polyglutamylase, between the basal body and the cilium. In Bos taurus (Bovine), this protein is Centrosomal protein of 41 kDa (CEP41).